The following is a 510-amino-acid chain: Serine/threonine-protein kinase UL13 homolog (510 aa).

Residues 1-63 (MDADDTPPNL…WANPSTATCM (63 aa)) form a disordered region. Residues 132–458 (RDRPRFAGRG…RRIFQCHAVR (327 aa)) form the Protein kinase domain. Residues 138–146 (AGRGTYGRV) and K157 contribute to the ATP site. D257 serves as the catalytic Proton acceptor.

This sequence belongs to the protein kinase superfamily. Ser/Thr protein kinase family. Post-translationally, autophosphorylated.

The protein resides in the virion tegument. Its subcellular location is the host nucleus. It carries out the reaction L-seryl-[protein] + ATP = O-phospho-L-seryl-[protein] + ADP + H(+). It catalyses the reaction L-threonyl-[protein] + ATP = O-phospho-L-threonyl-[protein] + ADP + H(+). In terms of biological role, multifunctional serine/threonine kinase that plays a role in several processes including egress of virus particles from the nucleus, modulation of the actin cytoskeleton and regulation of viral and cellular gene expression. Regulates the nuclear localization of viral envelopment factor proteins 24 and 27, by phosphorylating the protein kinase ORF66, indicating a role in nuclear egress. Disrupts host nuclear lamins, including LMNA and LMNB1. Phosphorylates the viral Fc receptor composed of glycoproteins E (gE) and I (gI). Phosphorylation of glycoprotein E (gE) by UL13 alters its subcellular localization, from the host early endosome to the plasma membrane. Participates in the transcriptional regulation of cellular and viral mRNAs mainly by phosphorylating the viral transcriptional regulator IE63. The polypeptide is Serine/threonine-protein kinase UL13 homolog (Varicella-zoster virus (strain Dumas) (HHV-3)).